Here is a 325-residue protein sequence, read N- to C-terminus: SAM pointed domain-containing Ets transcription factor (325 aa).

Disordered stretches follow at residues G27–T50 and A79–S100. The PNT domain maps to E119 to A203. Residues I239–V322 constitute a DNA-binding region (ETS).

It belongs to the ETS family. In terms of assembly, interacts with the DNA-binding domain of the androgen receptor. Interacts with NKX3-1. As to expression, expressed in the accessory glands of sex organs including the prostate, seminal vesicle, coagulating gland in males, the oviduct in females, and in intestines. Expression is epithelial-specific.

The protein resides in the nucleus. Functionally, may function as an androgen-independent transactivator of the prostate-specific antigen (PSA) promoter. Binds to 5'-GGAT-3' DNA sequences. May play a role in the regulation of the prostate gland and/or prostate cancer development. Acts as a transcriptional activator for SERPINB5 promoter. The protein is SAM pointed domain-containing Ets transcription factor (Spdef) of Mus musculus (Mouse).